A 372-amino-acid polypeptide reads, in one-letter code: Glutamate 5-kinase (372 aa).

K14 contacts ATP. 3 residues coordinate substrate: S54, D141, and N153. ATP is bound at residue 173–174 (TD). In terms of domain architecture, PUA spans 280 to 358 (RGTLVLDAGA…DAIESLLGYS (79 aa)).

This sequence belongs to the glutamate 5-kinase family.

The protein resides in the cytoplasm. The enzyme catalyses L-glutamate + ATP = L-glutamyl 5-phosphate + ADP. It participates in amino-acid biosynthesis; L-proline biosynthesis; L-glutamate 5-semialdehyde from L-glutamate: step 1/2. Functionally, catalyzes the transfer of a phosphate group to glutamate to form L-glutamate 5-phosphate. The protein is Glutamate 5-kinase of Pseudomonas putida (strain W619).